Here is a 245-residue protein sequence, read N- to C-terminus: DNA polymerase sliding clamp (245 aa).

Belongs to the PCNA family. In terms of assembly, homotrimer. The subunits circularize to form a toroid; DNA passes through its center. Replication factor C (RFC) is required to load the toroid on the DNA.

Functionally, sliding clamp subunit that acts as a moving platform for DNA processing. Responsible for tethering the catalytic subunit of DNA polymerase and other proteins to DNA during high-speed replication. This is DNA polymerase sliding clamp from Picrophilus torridus (strain ATCC 700027 / DSM 9790 / JCM 10055 / NBRC 100828 / KAW 2/3).